The following is a 274-amino-acid chain: 4-diphosphocytidyl-2-C-methyl-D-erythritol kinase (274 aa).

Lys-9 is a catalytic residue. Residue 91 to 101 coordinates ATP; sequence PAGAGLGGGSS. The active site involves Asp-133.

It belongs to the GHMP kinase family. IspE subfamily.

The catalysed reaction is 4-CDP-2-C-methyl-D-erythritol + ATP = 4-CDP-2-C-methyl-D-erythritol 2-phosphate + ADP + H(+). The protein operates within isoprenoid biosynthesis; isopentenyl diphosphate biosynthesis via DXP pathway; isopentenyl diphosphate from 1-deoxy-D-xylulose 5-phosphate: step 3/6. In terms of biological role, catalyzes the phosphorylation of the position 2 hydroxy group of 4-diphosphocytidyl-2C-methyl-D-erythritol. This Persephonella marina (strain DSM 14350 / EX-H1) protein is 4-diphosphocytidyl-2-C-methyl-D-erythritol kinase.